The chain runs to 254 residues: 5'-nucleotidase SurE (254 aa).

The a divalent metal cation site is built by Asp-8, Asp-9, Ser-40, and Asn-93.

Belongs to the SurE nucleotidase family. It depends on a divalent metal cation as a cofactor.

It is found in the cytoplasm. The catalysed reaction is a ribonucleoside 5'-phosphate + H2O = a ribonucleoside + phosphate. In terms of biological role, nucleotidase that shows phosphatase activity on nucleoside 5'-monophosphates. The protein is 5'-nucleotidase SurE of Methylobacterium radiotolerans (strain ATCC 27329 / DSM 1819 / JCM 2831 / NBRC 15690 / NCIMB 10815 / 0-1).